The chain runs to 267 residues: MSLGIGIIGAGGRMGRMLIEVVHRQPGVHVAAATDRTGGEAVGRDAGELAGQGSLGVPIGDDIPAAVAASDAVIDFSLPEATETVAAACAEAGRPLVLGTTGLGETQREAVHRLAEQVAVMHAANYSTGVTLLTALVEQAARAIGVYSDIEIIEAHHRHKVDAPSGTALRLGEAVADALGRDLSQCAVYGREGHTGERDPQTIGFETIRAGDIVGDHTVLFGGDGERVELTHKASSRTTFASGAVRAAAWVVEQPPGLYDMRDMIGV.

Residues 9-14 (GAGGRM) and Asp35 contribute to the NAD(+) site. Position 36 (Arg36) interacts with NADP(+). NAD(+) contacts are provided by residues 99–101 (GTT) and 123–126 (AANY). His156 acts as the Proton donor/acceptor in catalysis. His157 is a (S)-2,3,4,5-tetrahydrodipicolinate binding site. The Proton donor role is filled by Lys160. 166 to 167 (GT) provides a ligand contact to (S)-2,3,4,5-tetrahydrodipicolinate.

It belongs to the DapB family.

It localises to the cytoplasm. The enzyme catalyses (S)-2,3,4,5-tetrahydrodipicolinate + NAD(+) + H2O = (2S,4S)-4-hydroxy-2,3,4,5-tetrahydrodipicolinate + NADH + H(+). The catalysed reaction is (S)-2,3,4,5-tetrahydrodipicolinate + NADP(+) + H2O = (2S,4S)-4-hydroxy-2,3,4,5-tetrahydrodipicolinate + NADPH + H(+). Its pathway is amino-acid biosynthesis; L-lysine biosynthesis via DAP pathway; (S)-tetrahydrodipicolinate from L-aspartate: step 4/4. In terms of biological role, catalyzes the conversion of 4-hydroxy-tetrahydrodipicolinate (HTPA) to tetrahydrodipicolinate. The chain is 4-hydroxy-tetrahydrodipicolinate reductase from Halorhodospira halophila (strain DSM 244 / SL1) (Ectothiorhodospira halophila (strain DSM 244 / SL1)).